The following is a 171-amino-acid chain: Bursicon (171 aa).

An N-terminal signal peptide occupies residues M1 to A31. Disulfide bonds link C47-C96, C61-C110, C71-C131, C75-C133, and C93-C136. Residues C47 to T137 form the CTCK domain.

Heterodimer of burs and pburs.

The protein localises to the secreted. Its function is as follows. Final heterodimeric neurohormone released at the end of the molting cycle, involved in the sclerotization (tanning) of the insect cuticle, melanization and wing spreading. In Culex pipiens pipiens (Northern house mosquito), this protein is Bursicon.